We begin with the raw amino-acid sequence, 447 residues long: Elongation factor 1-alpha (447 aa).

Positions 5–230 constitute a tr-type G domain; that stretch reads KIHISIVVIG…DQINEPKRPS (226 aa). Residues 14-21 are G1; sequence GHVDSGKS. 14–21 is a binding site for GTP; sequence GHVDSGKS. Lysine 55 carries the post-translational modification N6,N6-dimethyllysine. Positions 70–74 are G2; sequence GITID. Lysine 79 is subject to N6,N6,N6-trimethyllysine. Residues 91 to 94 are G3; sequence DAPG. Residues 91–95 and 153–156 each bind GTP; these read DAPGH and NKMD. The interval 153 to 156 is G4; it reads NKMD. Residue lysine 187 is modified to N6,N6,N6-trimethyllysine. The interval 194-196 is G5; the sequence is SGF. Lysine 261 is subject to N6-methyllysine. The residue at position 289 (glutamate 289) is a 5-glutamyl glycerylphosphorylethanolamine. Lysine 306 bears the N6,N6,N6-trimethyllysine mark. 5-glutamyl glycerylphosphorylethanolamine is present on glutamate 362. Position 396 is an N6,N6,N6-trimethyllysine (lysine 396).

This sequence belongs to the TRAFAC class translation factor GTPase superfamily. Classic translation factor GTPase family. EF-Tu/EF-1A subfamily.

The protein resides in the cytoplasm. Functionally, this protein promotes the GTP-dependent binding of aminoacyl-tRNA to the A-site of ribosomes during protein biosynthesis. The polypeptide is Elongation factor 1-alpha (BLT63) (Hordeum vulgare (Barley)).